A 68-amino-acid chain; its full sequence is MPQLNTTVWPTIIMSMLLALFLLMQLKTLNTHYHPPASPKLTNIKPHNNPWEHKWTKIYSLHSLPPQF.

A helical membrane pass occupies residues valine 8 to methionine 24. Lysine 54 is subject to N6-acetyllysine; alternate. N6-succinyllysine; alternate is present on lysine 54. Residue lysine 57 is modified to N6-acetyllysine.

The protein belongs to the ATPase protein 8 family. In terms of assembly, F-type ATPases have 2 components, CF(1) - the catalytic core - and CF(0) - the membrane proton channel. Component of an ATP synthase complex composed of ATP5PB, ATP5MC1, ATP5F1E, ATP5PD, ATP5ME, ATP5PF, ATP5MF, MT-ATP6, MT-ATP8, ATP5F1A, ATP5F1B, ATP5F1D, ATP5F1C, ATP5PO, ATP5MG, ATP5MK and ATP5MJ. Interacts with PRICKLE3.

Its subcellular location is the mitochondrion membrane. Its function is as follows. Mitochondrial membrane ATP synthase (F(1)F(0) ATP synthase or Complex V) produces ATP from ADP in the presence of a proton gradient across the membrane which is generated by electron transport complexes of the respiratory chain. F-type ATPases consist of two structural domains, F(1) - containing the extramembraneous catalytic core and F(0) - containing the membrane proton channel, linked together by a central stalk and a peripheral stalk. During catalysis, ATP synthesis in the catalytic domain of F(1) is coupled via a rotary mechanism of the central stalk subunits to proton translocation. Part of the complex F(0) domain. Minor subunit located with subunit a in the membrane. This is ATP synthase protein 8 (MT-ATP8) from Hylobates lar (Lar gibbon).